Reading from the N-terminus, the 424-residue chain is S-phase kinase-associated protein 2 (424 aa).

The tract at residues 52-73 is disordered; that stretch reads PHGLLSNLGHPQSPPRKRVKGK. S64 carries the post-translational modification Phosphoserine. The Nuclear localization signal signature appears at 67 to 73; sequence RKRVKGK. N6-acetyllysine; by p300/EP300 occurs at positions 68 and 71. S75 carries the post-translational modification Phosphoserine. The F-box domain maps to 94–140; that stretch reads GVSWDSLPDELLLGIFSCLCLPELLRVSGVCKRWYRLSLDESLWQSL. 10 LRR repeats span residues 151 to 176, 177 to 204, 210 to 234, 235 to 257, 258 to 284, 286 to 308, 309 to 330, 334 to 356, 359 to 378, and 380 to 401; these read VTVR…PLGE, SFSS…ILSE, NLSL…NLVR, LNLC…SCSR, LDEL…LPNT, TQLN…IIKR, CPNL…CFPE, LNYL…LLEL, IPTL…TLQL, and REAL…RPTM. The residue at position 179 (S179) is a Phosphoserine.

As to quaternary structure, part of a SCF(SKP2) complex consisting of CUL1, RBX1, SKP1 and SKP2. Component of a SCF(SKP2)-like complex containing CUL1, SKP1, TRIM21 and SKP2. Interacts directly with CUL1 and SKP1. Interacts with ASB2 which is the substrate-recognition component of a probable ECS E3 ubiquitin-protein ligase complex; ASB2 is likely to bridge the formation of dimeric E3-ubiquitin-protein ligase complexes composed of an ECS complex and an SCF(SKP2) complex. Interacts with CKS1. Interacts with the cyclin-A-CDK2 complex. Interacts with ORC1, phosphorylated CDT1, phosphorylated RBL2, ELF4, phosphorylated RAG2, FOXO1, UBP43, MYC, TOB1, TAL1 and KMT2A/MLL1. Interacts with TRIM21. Interacts with cyclin-E. Interacts with CARM1. In terms of processing, phosphorylated on serine and threonine resudues in response to DNA damage, promoting 'Lys-63'-linked ubiquitination of NBN. Ubiquitinated by the APC/C complex, leading to its degradation by the proteasome. Deubiquitinated by USP13. Post-translationally, acetylation at Lys-68 and Lys-71 increases stability through impairment of APC/C-mediated proteolysis and promotes cytoplasmic retention. Deacetylated by SIRT3.

The protein resides in the cytoplasm. The protein localises to the nucleus. It functions in the pathway protein modification; protein ubiquitination. In terms of biological role, substrate recognition component of a SCF (SKP1-CUL1-F-box protein) E3 ubiquitin-protein ligase complex which mediates the ubiquitination and subsequent proteasomal degradation of target proteins involved in cell cycle progression, signal transduction and transcription. Specifically recognizes phosphorylated CDKN1B/p27kip and is involved in regulation of G1/S transition. Degradation of CDKN1B/p27kip also requires CKS1. Recognizes target proteins ORC1, CDT1, RBL2, KMT2A/MLL1, CDK9, RAG2, NBN, FOXO1, UBP43, YTHDF2, and probably MYC, TOB1 and TAL1. Degradation of TAL1 also requires STUB1. Recognizes CDKN1A in association with CCNE1 or CCNE2 and CDK2. Promotes ubiquitination and destruction of CDH1 in a CK1-dependent manner, thereby regulating cell migration. Following phosphorylation in response to DNA damage, mediates 'Lys-63'-linked ubiquitination of NBN, promoting ATM recruitment to DNA damage sites and DNA repair via homologous recombination. Functionally, through the ubiquitin-mediated proteasomal degradation of viral proteins may have an antiviral activity. In Mus musculus (Mouse), this protein is S-phase kinase-associated protein 2 (Skp2).